The chain runs to 139 residues: Acidic phospholipase A2 S1E6-c (139 aa).

The first 16 residues, 1-16 (MRTLWILAVLLVGVEG), serve as a signal peptide directing secretion. 7 disulfide bridges follow: cysteine 42–cysteine 132, cysteine 44–cysteine 60, cysteine 59–cysteine 111, cysteine 65–cysteine 139, cysteine 66–cysteine 104, cysteine 73–cysteine 97, and cysteine 91–cysteine 102. Residues tyrosine 43, glycine 45, and glycine 47 each coordinate Ca(2+). The active site involves histidine 63. Aspartate 64 is a binding site for Ca(2+). Aspartate 105 is a catalytic residue.

It belongs to the phospholipase A2 family. Group II subfamily. D49 sub-subfamily. Homodimer. The cofactor is Ca(2+). In terms of tissue distribution, expressed by the venom gland.

It localises to the secreted. It catalyses the reaction a 1,2-diacyl-sn-glycero-3-phosphocholine + H2O = a 1-acyl-sn-glycero-3-phosphocholine + a fatty acid + H(+). In terms of biological role, snake venom phospholipase A2 (PLA2) that inhibits ADP-induced platelet aggregation. PLA2 catalyzes the calcium-dependent hydrolysis of the 2-acyl groups in 3-sn-phosphoglycerides. The polypeptide is Acidic phospholipase A2 S1E6-c (Calloselasma rhodostoma (Malayan pit viper)).